The primary structure comprises 374 residues: MKIYYEDSLPYAAEFFAGLGDSQVFSHKDVNGELVADADVLLVRSTTKVNAELLKANQNIKYVGTATAGTNHLDKEYLRSRGLDIHSAAGCNAVAVAEYVLSALFVMAEKLDWQLTTKTVGIVGAGHVGTRLTEKLTALGIRYHLCDPPLADAGDTRDFVDMDTIMQCDIISLHVPLIEGGQYNTGHMFDAKRIGQLRKDQLLINACRGEVIDNKALLKSFESGYKLNVVLDVWENEPDIDQALVPYIALATAHIAGHTVEGKARGTEMLYQQVCEQFGFNATKKLSDYLPAPQPSIITLDETLSGQAQLSALVLSVYDIRKDSKQFKETIEQPDQFRYIRKNYSIRREFAALSVNTGNYSGSEAIYALGFNRK.

The substrate site is built by serine 45 and threonine 67. Aspartate 147 contributes to the NAD(+) binding site. Arginine 208 is a catalytic residue. Aspartate 232 is an NAD(+) binding site. The active site involves glutamate 237. The active-site Proton donor is the histidine 254. NAD(+) is bound at residue glycine 257.

The protein belongs to the D-isomer specific 2-hydroxyacid dehydrogenase family. PdxB subfamily. In terms of assembly, homodimer.

The protein localises to the cytoplasm. It catalyses the reaction 4-phospho-D-erythronate + NAD(+) = (R)-3-hydroxy-2-oxo-4-phosphooxybutanoate + NADH + H(+). Its pathway is cofactor biosynthesis; pyridoxine 5'-phosphate biosynthesis; pyridoxine 5'-phosphate from D-erythrose 4-phosphate: step 2/5. Functionally, catalyzes the oxidation of erythronate-4-phosphate to 3-hydroxy-2-oxo-4-phosphonooxybutanoate. This Pseudoalteromonas atlantica (strain T6c / ATCC BAA-1087) protein is Erythronate-4-phosphate dehydrogenase.